A 905-amino-acid chain; its full sequence is Cadherin-2B (905 aa).

A signal peptide spans 1–28 (MCRKQPFLLPTLLGILAALMLQQGPVEA). Positions 29 to 160 (FGGSRLCKTG…NSNGLQRQKR (132 aa)) are excised as a propeptide. Cadherin domains follow at residues 161-268 (DWVI…RPEF), 269-383 (LHQI…PPEF), 384-498 (TAMT…NPYF), 499-604 (TPNP…DNAP), and 605-713 (YVYP…TTAP). Residues 161 to 723 (DWVIPPINVP…IIGTGLGTGA (563 aa)) lie on the Extracellular side of the membrane. Glu171 serves as a coordination point for Ca(2+). N-linked (GlcNAc...) asparagine glycosylation occurs at Asn191. The Ca(2+) site is built by Asp227, Glu229, Asp260, Met261, Asn262, Asp263, and Asn264. Asn274 carries N-linked (GlcNAc...) asparagine glycosylation. Ca(2+)-binding residues include Asp294, Asp296, and Asn302. Asn326 carries N-linked (GlcNAc...) asparagine glycosylation. Residue Asp354 coordinates Ca(2+). 5 N-linked (GlcNAc...) asparagine glycosylation sites follow: Asn403, Asn573, Asn623, Asn651, and Asn692. The chain crosses the membrane as a helical span at residues 724-745 (IIAILLCIIILLTLVLMFVVWM). Residues 746-905 (KRRDKERQAK…LADMYGGSDD (160 aa)) are Cytoplasmic-facing. 2 disordered regions span residues 774 to 800 (EEGG…PDTI) and 862 to 883 (SGST…EQDY). A compositionally biased stretch (acidic residues) spans 775-784 (EGGGEEDQDY). The span at 862–879 (SGSTAGSLSSLNSSSSGG) shows a compositional bias: low complexity.

Homodimer (via extracellular region). Can also form heterodimers with other cadherins (via extracellular region). Dimerization occurs in trans, i.e. with a cadherin chain from another cell.

It localises to the cell membrane. The protein localises to the sarcolemma. Its subcellular location is the cell junction. The protein resides in the cell surface. It is found in the desmosome. It localises to the adherens junction. Its function is as follows. Calcium-dependent cell adhesion protein; preferentially mediates homotypic cell-cell adhesion. Cadherins may thus contribute to the sorting of heterogeneous cell types, and thereby play an important role during embryonic development. Required for proper neurite branching. Required for pre- and postsynaptic organization. This chain is Cadherin-2B (cdh2-b), found in Xenopus laevis (African clawed frog).